Consider the following 414-residue polypeptide: MSLEMFDKEIFDLTNKELERQCEGLEMIASENFTLPEVMEVMGSILTNKYAEGYPGKRYYGGCEFVDEIETLAIQRCKKLFNCKFANVQPNSGSQANQGVYAALINPGDKILGMDLSHGGHLTHGAKVSSSGKMYESCFYGVELDGRIDYEKVREIAKKEKPKLIVCGASAYARVIDFAKFREIADEIGAYLFADIAHIAGLVVAGEHPSPFPYAHVVSSTTHKTLRGPRGGIIMTNDEEFAKKINSAIFPGIQGGPLMHVIAAKAVGFKFNLSDEWKIYAKQVRTNAQVLANVLMDRKFKLVSDGTDNHLVLMSFLDREFSGKDADLALGNAGITANKNTVPGEIRSPFITSGLRLGTPALTARGFKEKEMEIVSNYIADILDDINNEKLQENIKQELKKLASNFIIYERAMF.

(6S)-5,6,7,8-tetrahydrofolate-binding positions include Leu-116 and 120-122 (GHL). Lys-224 carries the N6-(pyridoxal phosphate)lysine modification. Residues Glu-240 and 348–350 (SPF) contribute to the (6S)-5,6,7,8-tetrahydrofolate site.

This sequence belongs to the SHMT family. In terms of assembly, homodimer. Pyridoxal 5'-phosphate is required as a cofactor.

The protein localises to the cytoplasm. It catalyses the reaction (6R)-5,10-methylene-5,6,7,8-tetrahydrofolate + glycine + H2O = (6S)-5,6,7,8-tetrahydrofolate + L-serine. The protein operates within one-carbon metabolism; tetrahydrofolate interconversion. It functions in the pathway amino-acid biosynthesis; glycine biosynthesis; glycine from L-serine: step 1/1. Its function is as follows. Catalyzes the reversible interconversion of serine and glycine with tetrahydrofolate (THF) serving as the one-carbon carrier. This reaction serves as the major source of one-carbon groups required for the biosynthesis of purines, thymidylate, methionine, and other important biomolecules. Also exhibits THF-independent aldolase activity toward beta-hydroxyamino acids, producing glycine and aldehydes, via a retro-aldol mechanism. This Campylobacter jejuni subsp. jejuni serotype O:23/36 (strain 81-176) protein is Serine hydroxymethyltransferase.